We begin with the raw amino-acid sequence, 340 residues long: Solute-binding protein Dde_0634 (340 aa).

The first 29 residues, 1–29 (MKSTFAALLIMVGCLVSGALLTGSEAAAA), serve as a signal peptide directing secretion. Residues Tyr-99, Arg-172, 210–213 (TSLD), and Tyr-235 contribute to the (indol-3-yl)acetate site.

The protein belongs to the bacterial solute-binding protein 7 family. As to quaternary structure, the complex is comprised of an extracytoplasmic solute-binding protein and a heteromeric permease formed by two transmembrane proteins.

It localises to the periplasm. Its function is as follows. Solute-binding protein that binds indole-3-pyruvate and indole-3-acetate (in vitro). Can also bind D-tryptophan (in vitro), but that is probably not a physiological ligand. Probably part of a tripartite ATP-independent periplasmic (TRAP) transport system that mediates solute transport into the cytoplasm. This Oleidesulfovibrio alaskensis (strain ATCC BAA-1058 / DSM 17464 / G20) (Desulfovibrio alaskensis) protein is Solute-binding protein Dde_0634.